We begin with the raw amino-acid sequence, 556 residues long: MSEAEARPSNFIRQIIDKDLADGKHTTVHTRFPPEPNGYLHIGHAKSICLNFGIAQDYQGQCNLRFDDTNPEKENLEYVESIKKDVTWLGFDWSGEVCYSSDYFDKLYEYAIELIQKGLAYVDELTPEQIREYRGTLTEPGKHSPYRDRSVEENLALFEKMRAGEFAEGQACLRAKIDMASSFIVMRDPVLYRVRFAEHHQTGDKWCIYPMYDFTHCISDALEGITHSICTLEFQDNRRLYDWVLDNITIPCHPRQYEFSRLNLEYTVMSKRKLNQLVTEKLVTGWDDPRMPTISGLRRRGFTPSAIREFCKRIGVTKQENMIEYSALESCIRDDLNENAPRAMAVLDPVKLVIENFAAGTVETLTLANHPNKPEMGDREVPFTRELWIEREDFREEANKKYKRLVLGKEVRLRGAYVIKAERIEKDEQGNITTIFCSYDPETLGKNPADGRKVKGVIHWVSAEKGVPAEFRLYERLFTVPNPGAADNFAETINPESLVKVQGYVEPSLVEAKPEFGYQFERMGYFCADNKDSSPQALVFNRTVGLRDSFAKIDEE.

The 'HIGH' region motif lies at 34–44 (PEPNGYLHIGH). Residues 35–37 (EPN) and 41–47 (HIGHAKS) contribute to the ATP site. Positions 67 and 212 each coordinate L-glutamine. ATP is bound by residues T231, 261–262 (RL), and 269–271 (MSK). Positions 268–272 (VMSKR) match the 'KMSKS' region motif.

Belongs to the class-I aminoacyl-tRNA synthetase family. In terms of assembly, monomer.

It localises to the cytoplasm. It catalyses the reaction tRNA(Gln) + L-glutamine + ATP = L-glutaminyl-tRNA(Gln) + AMP + diphosphate. The sequence is that of Glutamine--tRNA ligase from Vibrio cholerae serotype O1 (strain ATCC 39315 / El Tor Inaba N16961).